Reading from the N-terminus, the 99-residue chain is Large ribosomal subunit protein uL23 (99 aa).

The protein belongs to the universal ribosomal protein uL23 family. Part of the 50S ribosomal subunit. Contacts protein L29, and trigger factor when it is bound to the ribosome.

Functionally, one of the early assembly proteins it binds 23S rRNA. One of the proteins that surrounds the polypeptide exit tunnel on the outside of the ribosome. Forms the main docking site for trigger factor binding to the ribosome. The sequence is that of Large ribosomal subunit protein uL23 from Streptococcus suis (strain 98HAH33).